We begin with the raw amino-acid sequence, 511 residues long: Phosphoenolpyruvate carboxylase (511 aa).

It belongs to the PEPCase type 2 family. Homotetramer. It depends on Mg(2+) as a cofactor.

It carries out the reaction oxaloacetate + phosphate = phosphoenolpyruvate + hydrogencarbonate. Its function is as follows. Catalyzes the irreversible beta-carboxylation of phosphoenolpyruvate (PEP) to form oxaloacetate (OAA), a four-carbon dicarboxylic acid source for the tricarboxylic acid cycle. The protein is Phosphoenolpyruvate carboxylase of Saccharolobus islandicus (strain Y.N.15.51 / Yellowstone #2) (Sulfolobus islandicus).